Here is a 172-residue protein sequence, read N- to C-terminus: Lipoprotein signal peptidase (172 aa).

3 consecutive transmembrane segments (helical) span residues 10–30 (LIWLLLSVLVVGLDQWSKAWV), 68–88 (WQLWFFTALAVGISGLLAFWL), and 98–118 (SALPYALVIGGAIGNVIDRLM). Active-site residues include Asp-124 and Asp-142. Residues 138-158 (FNIADSAIVGGAIGIAVFGLF) form a helical membrane-spanning segment.

The protein belongs to the peptidase A8 family.

It is found in the cell inner membrane. It carries out the reaction Release of signal peptides from bacterial membrane prolipoproteins. Hydrolyzes -Xaa-Yaa-Zaa-|-(S,diacylglyceryl)Cys-, in which Xaa is hydrophobic (preferably Leu), and Yaa (Ala or Ser) and Zaa (Gly or Ala) have small, neutral side chains.. The protein operates within protein modification; lipoprotein biosynthesis (signal peptide cleavage). Its function is as follows. This protein specifically catalyzes the removal of signal peptides from prolipoproteins. The chain is Lipoprotein signal peptidase from Xanthomonas euvesicatoria pv. vesicatoria (strain 85-10) (Xanthomonas campestris pv. vesicatoria).